The following is a 72-amino-acid chain: uncharacterized protein (72 aa).

This is an uncharacterized protein from Escherichia coli (strain K12).